A 730-amino-acid polypeptide reads, in one-letter code: Nitrogen fixation protein FixI (730 aa).

The Cytoplasmic segment spans residues 1–101; the sequence is MHVTRDFSHY…AEVAEVAESR (101 aa). An HMA domain is found at 19–85; sequence KHIDLAVEGV…RLEELGYKAY (67 aa). Cys-30 and Cys-33 together coordinate a metal cation. The helical transmembrane segment at 102-123 threads the bilayer; it reads FLLRCLGVAAFATMNVMMLSIP. At 124–138 the chain is on the extracellular side; the sequence is VWSGNVSDMLPEQRD. A helical membrane pass occupies residues 139-162; the sequence is FFHWLSALIALPAAAYAGQPFFRS. The Cytoplasmic segment spans residues 163–168; it reads AWRALS. A helical transmembrane segment spans residues 169-190; sequence AKTTNMDVPISIGVILALGMSV. Residues 191–202 lie on the Extracellular side of the membrane; it reads VETIHHAEHAYF. The chain crosses the membrane as a helical span at residues 203–223; that stretch reads DAAIMLLTFLLVGRFLDQNMR. Residues 224-352 lie on the Cytoplasmic side of the membrane; the sequence is RRTRAVAGNL…RSRYMRLADR (129 aa). A helical transmembrane segment spans residues 353–375; the sequence is ASRLYAPVVHATALITILGWVIA. The Extracellular portion of the chain corresponds to 376-382; sequence GASWHDA. The helical transmembrane segment at 383-400 threads the bilayer; the sequence is IVTGVAVLIITCPCALGL. At 401–676 the chain is on the cytoplasmic side; that stretch reads AIPTVQTVAS…DSARKALHLM (276 aa). Asp-438 acts as the 4-aspartylphosphate intermediate in catalysis. Mg(2+) is bound by residues Asp-622 and Asp-626. The helical transmembrane segment at 677–696 threads the bilayer; that stretch reads RQNLWLAIGYNVLAVPVAIS. At 697–701 the chain is on the extracellular side; it reads GVVTP. The helical transmembrane segment at 702 to 720 threads the bilayer; it reads LIAAAAMSGSSILVMLNSL. The Cytoplasmic portion of the chain corresponds to 721-730; that stretch reads RARSDSREIV.

This sequence belongs to the cation transport ATPase (P-type) (TC 3.A.3) family. Type IB subfamily.

It localises to the cell membrane. It catalyses the reaction ATP + H2O = ADP + phosphate + H(+). FixI is a pump of a specific cation involved in symbiotic nitrogen fixation. The four proteins FixG, FixH, FixI, and FixS may participate in a membrane-bound complex coupling the FixI cation pump with a redox process catalyzed by FixG. The polypeptide is Nitrogen fixation protein FixI (fixI) (Bradyrhizobium diazoefficiens (strain JCM 10833 / BCRC 13528 / IAM 13628 / NBRC 14792 / USDA 110)).